The following is a 573-amino-acid chain: MTNSKGRSITDKTSGGPSNGGGFVDWTLRLNTIQSDKFLNLLLSMVPVIYQKNQEDRHKKANGIWQDGLSTAVQTFSNRSEQHMEYHSFSEQSFHANNGHASSSCSQKYDDYANYNYCDGRETSETTAMLQDEDVSSDGDEDAIVEVTPKLPKESSGIMALQILVPFLLAGFGTVSAGMVLDIVQHWEVFRKVTEVFILVPALLGLKGNLEMTLASRLSTAVNIGKMDSPIEKWNLIIGNLALKQVQATVVGFLAAVAAIILGWIPEGKYYLDHSILLCSSSVATAFIASLLQGIIMVGVIVGSKKTGINPDNVATPIAASFGDLITLAILAWISQGLYSCLETYYYISPLVGVFFLALTPIWIIIAAKHPATRTVLHSGWEPVITAMVISSIGGLILDTTVSDPNLVGIVVYTPVINGIGGNLVAIQASRISTYLHLHSIPGELPDEPKGCYYPFRTFFGPGVNNKSAQVLLLLVIPGHLIFLYTIHLMKSGHTSLTIIFIVVYLFAAVLQVFTLLWIADWMVHHFWRKGKDPDSFSIPYLTALGDLLGTALLALSFHFLWLIGDRDGDVGD.

The Extracellular portion of the chain corresponds to 1-162 (MTNSKGRSIT…KESSGIMALQ (162 aa)). Ser136 and Ser137 each carry phosphoserine. A helical transmembrane segment spans residues 163–183 (ILVPFLLAGFGTVSAGMVLDI). The Cytoplasmic portion of the chain corresponds to 184–195 (VQHWEVFRKVTE). Residues 196–216 (VFILVPALLGLKGNLEMTLAS) traverse the membrane as a helical segment. Residues 217-245 (RLSTAVNIGKMDSPIEKWNLIIGNLALKQ) are Extracellular-facing. A helical membrane pass occupies residues 246 to 266 (VQATVVGFLAAVAAIILGWIP). Residues 267-282 (EGKYYLDHSILLCSSS) are Cytoplasmic-facing. Residues 283-303 (VATAFIASLLQGIIMVGVIVG) traverse the membrane as a helical segment. Over 304-313 (SKKTGINPDN) the chain is Extracellular. The chain crosses the membrane as a helical span at residues 314 to 334 (VATPIAASFGDLITLAILAWI). Residues 335–347 (SQGLYSCLETYYY) lie on the Cytoplasmic side of the membrane. Residues 348 to 368 (ISPLVGVFFLALTPIWIIIAA) traverse the membrane as a helical segment. Residues 369–376 (KHPATRTV) lie on the Extracellular side of the membrane. A helical transmembrane segment spans residues 377 to 397 (LHSGWEPVITAMVISSIGGLI). Over 398-406 (LDTTVSDPN) the chain is Cytoplasmic. Residues 407–427 (LVGIVVYTPVINGIGGNLVAI) traverse the membrane as a helical segment. Topologically, residues 428-469 (QASRISTYLHLHSIPGELPDEPKGCYYPFRTFFGPGVNNKSA) are extracellular. Residues 470 to 490 (QVLLLLVIPGHLIFLYTIHLM) traverse the membrane as a helical segment. Over 491–498 (KSGHTSLT) the chain is Cytoplasmic. Residues 499 to 519 (IIFIVVYLFAAVLQVFTLLWI) traverse the membrane as a helical segment. The Extracellular segment spans residues 520–543 (ADWMVHHFWRKGKDPDSFSIPYLT). A helical membrane pass occupies residues 544 to 564 (ALGDLLGTALLALSFHFLWLI). The Cytoplasmic segment spans residues 565-573 (GDRDGDVGD).

Belongs to the SLC41A transporter family.

It is found in the cell membrane. It carries out the reaction Mg(2+)(in) = Mg(2+)(out). The catalysed reaction is Mn(2+)(in) = Mn(2+)(out). The enzyme catalyses Co(2+)(in) = Co(2+)(out). It catalyses the reaction Ni(2+)(in) = Ni(2+)(out). It carries out the reaction Fe(2+)(in) = Fe(2+)(out). Acts as a plasma-membrane magnesium transporter. Can also mediate the transport of other divalent metal cations in an order of Ba(2+) &gt; Ni(2+) &gt; Co(2+) &gt; Fe(2+) &gt; Mn(2+). In Macaca fascicularis (Crab-eating macaque), this protein is Solute carrier family 41 member 2 (SLC41A2).